A 46-amino-acid chain; its full sequence is DNA-directed RNA polymerase subunit Rpo12 (46 aa).

Residues C8, C23, and C26 each coordinate Zn(2+).

It belongs to the archaeal Rpo12/eukaryotic RPC10 RNA polymerase subunit family. In terms of assembly, part of the RNA polymerase complex. Zn(2+) is required as a cofactor.

The protein localises to the cytoplasm. It carries out the reaction RNA(n) + a ribonucleoside 5'-triphosphate = RNA(n+1) + diphosphate. In terms of biological role, DNA-dependent RNA polymerase (RNAP) catalyzes the transcription of DNA into RNA using the four ribonucleoside triphosphates as substrates. The chain is DNA-directed RNA polymerase subunit Rpo12 from Archaeoglobus fulgidus (strain ATCC 49558 / DSM 4304 / JCM 9628 / NBRC 100126 / VC-16).